Consider the following 94-residue polypeptide: Co-chaperonin GroES (94 aa).

The protein belongs to the GroES chaperonin family. In terms of assembly, heptamer of 7 subunits arranged in a ring. Interacts with the chaperonin GroEL.

The protein resides in the cytoplasm. Functionally, together with the chaperonin GroEL, plays an essential role in assisting protein folding. The GroEL-GroES system forms a nano-cage that allows encapsulation of the non-native substrate proteins and provides a physical environment optimized to promote and accelerate protein folding. GroES binds to the apical surface of the GroEL ring, thereby capping the opening of the GroEL channel. The protein is Co-chaperonin GroES of Bacillus pumilus (strain SAFR-032).